The sequence spans 2514 residues: Polyprotein P1234 (2514 aa).

In terms of domain architecture, Alphavirus-like MT spans 28–259; that stretch reads EPKQVTPNDH…ESRKLLQSWH (232 aa). Residues 244–263 form a nsP1 membrane-binding region; that stretch reads GSTLYPESRKLLQSWHLPSV. S-palmitoyl cysteine; by host attachment occurs at residues Cys417 and Cys419. Positions 690-842 constitute a (+)RNA virus helicase ATP-binding domain; it reads DLTSPPYHEF…HNICTQVYHK (153 aa). Residue 721–728 coordinates a ribonucleoside 5'-triphosphate; the sequence is GVPGSGKS. In terms of domain architecture, (+)RNA virus helicase C-terminal spans 843–991; it reads SISRRCTLPV…IKEWEAEHAS (149 aa). A Peptidase C9 domain is found at 1004 to 1327; it reads DTFQNKANVC…NQLNAVYAGL (324 aa). The segment at 1005–1024 is nucleolus localization signal; that stretch reads TFQNKANVCWAKCLVPILDT. The active-site For cysteine protease nsP2 activity is the Cys1013. The Nuclear export signal signature appears at 1058–1067; sequence TRIYGVDLDS. The active-site For cysteine protease nsP2 activity is His1083. Residues 1182–1186 carry the Nuclear localization signal motif; it reads PTKRV. One can recognise a Macro domain in the interval 1334-1493; sequence APSYRVKRMD…KITEAISLRS (160 aa). ADP-D-ribose contacts are provided by Asp1343, Asn1357, Gly1365, Gly1445, Val1446, and Tyr1447. Residues Cys1595, Cys1597, Cys1620, and Cys1638 each coordinate Zn(2+). 2 consecutive short sequence motifs (FGDF; binding to host G3BP1) follow at residues 1852 to 1855 and 1870 to 1873; these read FGDF. The 116-residue stretch at 2268 to 2383 folds into the RdRp catalytic domain; it reads DAVLETDIAS…HGVVSDALMA (116 aa).

In terms of assembly, interacts with non-structural protein 3. Interacts with RNA-directed RNA polymerase nsP4. Interacts with protease nsP2. interacts with itself. As to quaternary structure, interacts with mRNA-capping enzyme nsP1. Interacts with host DDX1. Interacts with host DDX3. Interacts (via C-terminus) with host G3BP1; this interaction inhibits the formation of host stress granules on viral mRNAs and the nsp3-G3BP1 complexes bind viral RNAs and probably orchestrate the assembly of viral replication complexes. Interacts (via C-terminus) with host G3BP2; this interaction inhibits the formation of host stress granules on viral mRNAs and the nsp3-G3BP2 complexes bind viral RNAs and probably orchestrate the assembly of viral replication complexes. Interacts with mRNA-capping enzyme nsP1. Interacts with protease nsP2. interacts with itself. In terms of assembly, interacts with RNA-directed RNA polymerase nsP4. Interacts with mRNA-capping enzyme nsP1. Interacts with KPNA1/karyopherin-alpha1; this interaction probably allows the active transport of protease nsP2 into the host nucleus. The cofactor is Mg(2+). Mn(2+) serves as cofactor. Specific enzymatic cleavages in vivo yield mature proteins. The processing of the polyprotein is temporally regulated. In early stages (1.7 hpi), P1234 is first cleaved in trans through its nsP2 protease activity, releasing P123 and nsP4, which associate to form the early replication complex. At the same time, P1234 is also cut at the nsP1/nsP2 site early in infection but with lower efficiency. After replication of the viral minus-strand RNAs (4 hpi), the polyproteins are cut at the nsP1/nsP2 and nsP2/nsP3 sites very efficiently, preventing accumulation of P123 and P1234 and allowing the formation of the late replication complex. NsP3/nsP4 site is not cleaved anymore and P34 is produced rather than nsP4. Post-translationally, specific enzymatic cleavages in vivo yield mature proteins. The processing of the polyprotein is temporally regulated. In early stages (1.7 hpi), P123 is cleaved at the nsP1/nsP2 site with low efficiency. After replication of the viral minus-strand RNAs (4 hpi), the polyproteins are cut at the nsP1/nsP2 and nsP2/nsP3 sites very efficiently, preventing accumulation of P123 and allowing the formation of the late replication complex. In terms of processing, palmitoylated by host palmitoyltransferases ZDHHC2 and ZDHHC19. Phosphorylated by host on serines and threonines. Post-translationally, ubiquitinated; targets the protein for rapid degradation via the ubiquitin system. Nsp4 is present in extremely low quantities due to low frequency of translation through the amber stop-codon and the degradation by the ubiquitin pathway.

The protein localises to the host cytoplasmic vesicle membrane. The protein resides in the host cell membrane. It is found in the host cell projection. It localises to the host filopodium. Its subcellular location is the host nucleus. The protein localises to the host cytoplasm. The enzyme catalyses GTP + S-adenosyl-L-methionine = N(7)-methyl-GTP + S-adenosyl-L-homocysteine. It catalyses the reaction N(7)-methyl-GTP + L-histidyl-[protein] = N(tele)-(N(7)-methylguanosine 5'-phospho)-L-histidyl-[protein] + diphosphate. The catalysed reaction is N(tele)-(N(7)-methylguanosine 5'-phospho)-L-histidyl-[protein] + a 5'-end diphospho-(purine-ribonucleoside) in mRNA + H(+) = a 5'-end (N(7)-methyl 5'-triphosphoguanosine)-(purine-ribonucleoside) in mRNA + L-histidyl-[protein]. It carries out the reaction a 5'-end triphospho-ribonucleoside in mRNA + H2O = a 5'-end diphospho-ribonucleoside in mRNA + phosphate + H(+). The enzyme catalyses a ribonucleoside 5'-triphosphate + H2O = a ribonucleoside 5'-diphosphate + phosphate + H(+). It catalyses the reaction ATP + H2O = ADP + phosphate + H(+). The catalysed reaction is RNA(n) + a ribonucleoside 5'-triphosphate = RNA(n+1) + diphosphate. It carries out the reaction 4-O-(ADP-D-ribosyl)-L-aspartyl-[protein] + H2O = L-aspartyl-[protein] + ADP-D-ribose + H(+). The enzyme catalyses 5-O-(ADP-D-ribosyl)-L-glutamyl-[protein] + H2O = L-glutamyl-[protein] + ADP-D-ribose + H(+). It catalyses the reaction RNA(n) + ATP = RNA(n)-3'-adenine ribonucleotide + diphosphate. The catalysed reaction is ADP-alpha-D-ribose 1''-phosphate + H2O = ADP-D-ribose + phosphate. Its function is as follows. Inactive precursor of the viral replicase, which is activated by cleavages carried out by the viral protease nsP2. The early replication complex formed by the polyprotein P123 and nsP4 synthesizes minus-strand RNAs. As soon P123 is cleaved into mature proteins, the plus-strand RNAs synthesis begins. Functionally, cytoplasmic capping enzyme that catalyzes two virus-specific reactions: methyltransferase and nsP1 guanylyltransferase. mRNA-capping is necessary since all viral RNAs are synthesized in the cytoplasm, and host capping enzymes are restricted to the nucleus. The enzymatic reaction involves a covalent link between 7-methyl-GMP and nsP1, whereas eukaryotic capping enzymes form a covalent complex only with GMP. nsP1 capping consists in the following reactions: GTP is first methylated into 7-methyl-GMP and then is covalently linked to nsP1 to form the m7GMp-nsP1 complex from which 7-methyl-GMP complex is transferred to the mRNA to create the cap structure. NsP1 is also needed for the initiation of the minus-strand RNAs synthesis. Probably serves as a membrane anchor for the replication complex composed of nsP1-nsP4. Palmitoylated nsP1 is remodeling host cell cytoskeleton, and induces filopodium-like structure formation at the surface of the host cell. In terms of biological role, multifunctional protein whose N-terminus is part of the RNA polymerase complex and displays NTPase, RNA triphosphatase and helicase activities. NTPase and RNA triphosphatase are involved in viral RNA capping and helicase keeps a check on the dsRNA replication intermediates. The C-terminus harbors a protease that specifically cleaves the polyproteins and releases the mature proteins. Required for the shutoff of minus-strand RNAs synthesis. Specifically inhibits the host IFN response by promoting the nuclear export of host STAT1. Also inhibits host transcription by inducing the rapid proteasome-dependent degradation of POLR2A, a catalytic subunit of the RNAPII complex. The resulting inhibition of cellular protein synthesis serves to ensure maximal viral gene expression and to evade host immune response. Its function is as follows. Seems to be essential for minus-strand RNAs and subgenomic 26S mRNAs synthesis. Displays mono-ADP-ribosylhydrolase activity. ADP-ribosylation is a post-translational modification that controls various processes of the host cell and the virus probably needs to revert it for optimal viral replication. Binds proteins of G3BP family and sequesters them into the viral RNA replication complexes thereby inhibiting the formation of host stress granules on viral mRNAs. The nsp3-G3BP complexes bind viral RNAs and probably orchestrate the assembly of viral replication complexes, thanks to the ability of G3BP family members to self-assemble and bind DNA. RNA dependent RNA polymerase. Replicates genomic and antigenomic RNA by recognizing replications specific signals. The early replication complex formed by the polyprotein P123 and nsP4 synthesizes minus-strand RNAs. The late replication complex composed of fully processed nsP1-nsP4 is responsible for the production of genomic and subgenomic plus-strand RNAs. This O'nyong-nyong virus (strain Gulu) (ONNV) protein is Polyprotein P1234.